The primary structure comprises 133 residues: Large ribosomal subunit protein bL20 (133 aa).

This sequence belongs to the bacterial ribosomal protein bL20 family.

In terms of biological role, binds directly to 23S ribosomal RNA and is necessary for the in vitro assembly process of the 50S ribosomal subunit. It is not involved in the protein synthesizing functions of that subunit. The chain is Large ribosomal subunit protein bL20 from Bartonella bacilliformis (strain ATCC 35685 / KC583 / Herrer 020/F12,63).